The chain runs to 285 residues: Large ribosomal subunit protein uL2 (285 aa).

Residues 215–285 form a disordered region; it reads GRSRHKGIRP…IIRNRKGEQY (71 aa). Residues 256–272 are compositionally biased toward basic residues; sequence WGKRHMGVKTRNMKKHS.

The protein belongs to the universal ribosomal protein uL2 family. As to quaternary structure, part of the 50S ribosomal subunit. Forms a bridge to the 30S subunit in the 70S ribosome.

Functionally, one of the primary rRNA binding proteins. Required for association of the 30S and 50S subunits to form the 70S ribosome, for tRNA binding and peptide bond formation. It has been suggested to have peptidyltransferase activity; this is somewhat controversial. Makes several contacts with the 16S rRNA in the 70S ribosome. This chain is Large ribosomal subunit protein uL2, found in Mycoplasma genitalium (strain ATCC 33530 / DSM 19775 / NCTC 10195 / G37) (Mycoplasmoides genitalium).